The primary structure comprises 623 residues: Putative ABC transporter ATP-binding protein MG014 homolog (623 aa).

The region spanning 16–325 (LILAPLFTFA…YIVLGLILTS (310 aa)) is the ABC transmembrane type-1 domain. 6 consecutive transmembrane segments (helical) span residues 27-47 (IIIDLIIPSFLASAIAVVFSI), 86-106 (VILLALFGLVFGLISIFCASI), 157-177 (FLRLIVRAPFLFIGGLAFAIA), 180-200 (SDMSISLAITFPLTFLVIGIL), 266-286 (NIPFTFFFSSMTIIIALLLVF), and 307-327 (IFAFFQYNFYIVLGLILTSLT). An ABC transporter domain is found at 365 to 611 (LEFKNVAFGL…CDIYVKMKQA (247 aa)). Residue 400 to 407 (GPTGSGKS) coordinates ATP.

This sequence belongs to the ABC transporter superfamily.

Its subcellular location is the cell membrane. This Mycoplasma pneumoniae (strain ATCC 29342 / M129 / Subtype 1) (Mycoplasmoides pneumoniae) protein is Putative ABC transporter ATP-binding protein MG014 homolog.